Consider the following 292-residue polypeptide: uncharacterized protein (292 aa).

The chain crosses the membrane as a helical span at residues 13-35 (LFILFIIVVCIYLLPRVAINAFY).

Belongs to the serine esterase family.

It localises to the membrane. This is an uncharacterized protein from Salmonella typhi.